The primary structure comprises 291 residues: Small ribosomal subunit protein uS2 (291 aa).

The interval 256–291 is disordered; the sequence is STTAPPNWEATGGDWATSTAPAEGWAGDAPAGETKW.

The protein belongs to the universal ribosomal protein uS2 family. Component of the small ribosomal subunit. Mature ribosomes consist of a small (40S) and a large (60S) subunit. The 40S subunit contains about 33 different proteins and 1 molecule of RNA (18S). The 60S subunit contains about 49 different proteins and 3 molecules of RNA (25S, 5.8S and 5S). Interacts with RPS21.

It localises to the cytoplasm. Its function is as follows. Required for the assembly and/or stability of the 40S ribosomal subunit. Required for the processing of the 20S rRNA-precursor to mature 18S rRNA in a late step of the maturation of 40S ribosomal subunits. This Coccidioides immitis (strain RS) (Valley fever fungus) protein is Small ribosomal subunit protein uS2.